The primary structure comprises 350 residues: N(4)-bis(aminopropyl)spermidine synthase (350 aa).

The protein belongs to the branched-chain polyamine synthase family.

It localises to the cytoplasm. The catalysed reaction is 2 S-adenosyl 3-(methylsulfanyl)propylamine + spermidine = N(4)-bis(aminopropyl)spermidine + 2 S-methyl-5'-thioadenosine + 2 H(+). The protein operates within amine and polyamine biosynthesis. In terms of biological role, involved in the biosynthesis of branched-chain polyamines, which support the growth of thermophiles under high-temperature conditions. Catalyzes the sequential condensation of spermidine with the aminopropyl groups of decarboxylated S-adenosylmethionines to produce N(4)-bis(aminopropyl)spermidine via N(4)-aminopropylspermidine. This Methanocaldococcus jannaschii (strain ATCC 43067 / DSM 2661 / JAL-1 / JCM 10045 / NBRC 100440) (Methanococcus jannaschii) protein is N(4)-bis(aminopropyl)spermidine synthase.